A 405-amino-acid chain; its full sequence is Mucosal addressin cell adhesion molecule 1 (405 aa).

The N-terminal stretch at 1–21 (MESILALLLALALVPYQLSRG) is a signal peptide. Ig-like domains follow at residues 22-109 (QSFQ…ILVY) and 110-227 (AFPD…TSPK). Residues 22–364 (QSFQVNPPES…PGQVTPNSSS (343 aa)) are Extracellular-facing. Cystine bridges form between Cys45/Cys91, Cys49/Cys95, and Cys132/Cys200. A mucin-like region spans residues 221 to 257 (QSQTSPKPPNTTSAEPYILTSSSTAEAVSTGLNITTL). N-linked (GlcNAc...) asparagine glycosylation is found at Asn230 and Asn253. Residues 255 to 275 (TTLPSAPPYPKLSPRTLSSEG) form a disordered region. The region spanning 258–357 (PSAPPYPKLS…EVTNLYVPGQ (100 aa)) is the Ig-like 3 domain. Cys293 and Cys341 are disulfide-bonded. Asn361 is a glycosylation site (N-linked (GlcNAc...) asparagine). The chain crosses the membrane as a helical span at residues 365–385 (TVVLWIGSLVLGLLALVFLAY). At 386 to 405 (RLWKCYRPGPRPDTSSCTHL) the chain is on the cytoplasmic side.

Homodimer. Post-translationally, O-glycosylated; contains syalic acid. The Ser/Thr-rich mucin-like domain may provide possible sites for O-glycosylation. In terms of tissue distribution, highly expressed on high endothelial venules (HEV) of organized intestinal lymphoid tissues like the Peyer patches and mesenteric lymph nodes, and in the lamina propria of the intestine. Some expression found in the spleen, and low levels of expression in the peripheral lymph nodes and the lactating mammary gland. No expression was detected in the liver, kidneys, lungs or in normal brain. Expressed as well in brain endothelioma cells, and mucosal tissues which are in a chronic state of inflammation, such as inflamed pancreas.

Its subcellular location is the membrane. Its function is as follows. Cell adhesion leukocyte receptor expressed by mucosal venules, helps to direct lymphocyte traffic into mucosal tissues including the Peyer patches and the intestinal lamina propria. It can bind both the integrin alpha-4/beta-7 and L-selectin, regulating both the passage and retention of leukocytes. Both isoform 1 and isoform 2 can adhere to integrin alpha-4/beta-7. Isoform 2, lacking the mucin-like domain, may be specialized in supporting integrin alpha-4/beta-7-dependent adhesion strengthening, independent of L-selectin binding. The chain is Mucosal addressin cell adhesion molecule 1 (Madcam1) from Mus musculus (Mouse).